Here is a 261-residue protein sequence, read N- to C-terminus: Small ribosomal subunit protein eS1z (261 aa).

Positions 1–18 (MAVGKNKRISKGKKGGKK) are enriched in basic residues. The disordered stretch occupies residues 1 to 20 (MAVGKNKRISKGKKGGKKKA).

The protein belongs to the eukaryotic ribosomal protein eS1 family. In terms of assembly, component of the small ribosomal subunit. Mature ribosomes consist of a small (40S) and a large (60S) subunit. The 40S subunit contains about 33 different proteins and 1 molecule of RNA (18S). The 60S subunit contains about 49 different proteins and 3 molecules of RNA (25S, 5.8S and 5S).

The protein resides in the cytoplasm. The protein is Small ribosomal subunit protein eS1z of Vitis vinifera (Grape).